The following is a 645-amino-acid chain: Envelope glycoprotein (645 aa).

An N-terminal signal peptide occupies residues 1-36; the sequence is MEGPTHPKPFKDKTFSWDLIILVGVVRVLLRLDVGM. Residues 37-589 are Extracellular-facing; it reads ANPSPHQVYN…FNKSPWFTTL (553 aa). Residues Asn-46 and Asn-61 are each glycosylated (N-linked (GlcNAc...) asparagine; by host). Disulfide bonds link Cys-128–Cys-150 and Cys-142–Cys-155. A disordered region spans residues 238 to 283; it reads QAMGPNLVLPEQKPPSRQSQTKSKVATQKPQTNGTTPRSVAPATMS. Residues 252–275 are compositionally biased toward polar residues; sequence PSRQSQTKSKVATQKPQTNGTTPR. N-linked (GlcNAc...) asparagine; by host glycans are attached at residues Asn-270, Asn-305, and Asn-310. 3 disulfides stabilise this stretch: Cys-315–Cys-318, Cys-315–Cys-542, and Cys-534–Cys-541. Positions 315–318 match the CXXC motif; sequence CWLC. 5 N-linked (GlcNAc...) asparagine; by host glycosylation sites follow: Asn-334, Asn-337, Asn-377, Asn-393, and Asn-413. The interval 451–471 is fusion peptide; it reads ISLTVALMLGGLTVGGIAAGV. 2 coiled-coil regions span residues 479–528 and 538–574; these read LETA…ILFL and KEECCFYADHTGLVRDNMAKLRERLKQRQQLFDSQQG. The interval 517 to 533 is immunosuppression; it reads LQNRRGLDILFLQGGGL. Positions 534 to 542 match the CX6CC motif; the sequence is CAALKEECC. Residues 590 to 610 traverse the membrane as a helical segment; the sequence is ISSIMGPLLILLLILLFGPCI. Cys-609 carries the S-palmitoyl cysteine; by host lipid modification. The Cytoplasmic segment spans residues 611-645; that stretch reads LNRLVQFVKDRISVVQALILTQQYQQIQQYDPDRP.

The mature envelope protein (Env) consists of a trimer of SU-TM heterodimers attached by a labile interchain disulfide bond. In terms of processing, specific enzymatic cleavages in vivo yield mature proteins. Envelope glycoproteins are synthesized as an inactive precursor that is N-glycosylated and processed likely by host cell furin or by a furin-like protease in the Golgi to yield the mature SU and TM proteins. The cleavage site between SU and TM requires the minimal sequence [KR]-X-[KR]-R. The R-peptide is released from the C-terminus of the cytoplasmic tail of the TM protein upon particle formation as a result of proteolytic cleavage by the viral protease. Cleavage of this peptide is required for TM to become fusogenic. Post-translationally, the CXXC motif is highly conserved across a broad range of retroviral envelope proteins. It is thought to participate in the formation of a labile disulfide bond possibly with the CX6CC motif present in the transmembrane protein. Isomerization of the intersubunit disulfide bond to an SU intrachain disulfide bond is thought to occur upon receptor recognition in order to allow membrane fusion. The transmembrane protein is palmitoylated. In terms of processing, the R-peptide is palmitoylated.

Its subcellular location is the virion membrane. It is found in the host cell membrane. Its function is as follows. The surface protein (SU) attaches the virus to the host cell by binding to its receptor. This interaction triggers the refolding of the transmembrane protein (TM) and is thought to activate its fusogenic potential by unmasking its fusion peptide. Fusion occurs at the host cell plasma membrane. The transmembrane protein (TM) acts as a class I viral fusion protein. Under the current model, the protein has at least 3 conformational states: pre-fusion native state, pre-hairpin intermediate state, and post-fusion hairpin state. During viral and target cell membrane fusion, the coiled coil regions (heptad repeats) assume a trimer-of-hairpins structure, positioning the fusion peptide in close proximity to the C-terminal region of the ectodomain. The formation of this structure appears to drive apposition and subsequent fusion of viral and target cell membranes. Membranes fusion leads to delivery of the nucleocapsid into the cytoplasm. This Feline sarcoma virus (strain SM) (Sm-FeSV) protein is Envelope glycoprotein (env).